The chain runs to 354 residues: Uroporphyrinogen decarboxylase (354 aa).

Substrate is bound by residues 27–31 (RQAGR), phenylalanine 46, aspartate 77, tyrosine 154, serine 209, and histidine 327.

It belongs to the uroporphyrinogen decarboxylase family. As to quaternary structure, homodimer.

The protein resides in the cytoplasm. The catalysed reaction is uroporphyrinogen III + 4 H(+) = coproporphyrinogen III + 4 CO2. Its pathway is porphyrin-containing compound metabolism; protoporphyrin-IX biosynthesis; coproporphyrinogen-III from 5-aminolevulinate: step 4/4. In terms of biological role, catalyzes the decarboxylation of four acetate groups of uroporphyrinogen-III to yield coproporphyrinogen-III. In Shewanella oneidensis (strain ATCC 700550 / JCM 31522 / CIP 106686 / LMG 19005 / NCIMB 14063 / MR-1), this protein is Uroporphyrinogen decarboxylase.